The sequence spans 257 residues: Imidazole glycerol phosphate synthase subunit HisF (257 aa).

Active-site residues include Asp-11 and Asp-130.

This sequence belongs to the HisA/HisF family. Heterodimer of HisH and HisF.

The protein localises to the cytoplasm. The catalysed reaction is 5-[(5-phospho-1-deoxy-D-ribulos-1-ylimino)methylamino]-1-(5-phospho-beta-D-ribosyl)imidazole-4-carboxamide + L-glutamine = D-erythro-1-(imidazol-4-yl)glycerol 3-phosphate + 5-amino-1-(5-phospho-beta-D-ribosyl)imidazole-4-carboxamide + L-glutamate + H(+). The protein operates within amino-acid biosynthesis; L-histidine biosynthesis; L-histidine from 5-phospho-alpha-D-ribose 1-diphosphate: step 5/9. Its function is as follows. IGPS catalyzes the conversion of PRFAR and glutamine to IGP, AICAR and glutamate. The HisF subunit catalyzes the cyclization activity that produces IGP and AICAR from PRFAR using the ammonia provided by the HisH subunit. In Aliivibrio fischeri (strain ATCC 700601 / ES114) (Vibrio fischeri), this protein is Imidazole glycerol phosphate synthase subunit HisF.